A 260-amino-acid polypeptide reads, in one-letter code: MAKLCAQQVSVVYASRRGALTALENVSMSVGSGEIVVALGASGCGKSTLLSLLAGFQPPTSGRVSVDGAPVAGPGADRGVVFQDDALMPWLNVIENVAFGLRMQGVGRDARHARARDVLRLVKLAGFEQHRIDEISGGMRQRVGLARALAADPSFLLMDEPLGALDALTREHMQTLLLDVWRATGKGVFLITHSVEEAVLLATELLILSPRPGRIVARHSLDFARRYAHGEPMRSIKSDPRFTEIHLALVEQLMRETEEV.

The ABC transporter domain maps to 6–235 (AQQVSVVYAS…RYAHGEPMRS (230 aa)). Position 40-47 (40-47 (GASGCGKS)) interacts with ATP.

Belongs to the ABC transporter superfamily. Taurine importer (TC 3.A.1.17.1) family. In terms of assembly, the complex is composed of two ATP-binding proteins (TauB), two transmembrane proteins (TauC) and a solute-binding protein (TauA).

Its subcellular location is the cell inner membrane. The catalysed reaction is taurine(out) + ATP + H2O = taurine(in) + ADP + phosphate + H(+). Its function is as follows. Part of the ABC transporter complex TauABC involved in taurine import. Responsible for energy coupling to the transport system. In Burkholderia pseudomallei (strain 1710b), this protein is Taurine import ATP-binding protein TauB.